Consider the following 305-residue polypeptide: Ribonuclease BN (305 aa).

Zn(2+) is bound by residues His64, His66, Asp68, His69, His141, Asp212, and His270. Asp68 functions as the Proton acceptor in the catalytic mechanism.

This sequence belongs to the RNase Z family. RNase BN subfamily. In terms of assembly, homodimer. Zn(2+) serves as cofactor.

Functionally, zinc phosphodiesterase, which has both exoribonuclease and endoribonuclease activities. The sequence is that of Ribonuclease BN from Shigella boydii serotype 18 (strain CDC 3083-94 / BS512).